Reading from the N-terminus, the 72-residue chain is Seed trypsin/chymotrypsin inhibitor IVB (72 aa).

Intrachain disulfides connect Cys8–Cys61, Cys9–Cys24, Cys12–Cys57, Cys14–Cys22, Cys31–Cys38, Cys35–Cys50, and Cys40–Cys48.

This sequence belongs to the Bowman-Birk serine protease inhibitor family. As to expression, seed.

Functionally, inhibitor of trypsin and of chymotrypsin. May function as a natural phytochemical defense against predators. In Pisum sativum (Garden pea), this protein is Seed trypsin/chymotrypsin inhibitor IVB.